The following is a 317-amino-acid chain: Lipoyl synthase (317 aa).

[4Fe-4S] cluster-binding residues include C59, C64, C70, C85, C89, C92, and S298. A Radical SAM core domain is found at 71–287 (WSQRHASFMI…AKIGKAKGFL (217 aa)).

It belongs to the radical SAM superfamily. Lipoyl synthase family. Requires [4Fe-4S] cluster as cofactor.

The protein resides in the cytoplasm. It carries out the reaction [[Fe-S] cluster scaffold protein carrying a second [4Fe-4S](2+) cluster] + N(6)-octanoyl-L-lysyl-[protein] + 2 oxidized [2Fe-2S]-[ferredoxin] + 2 S-adenosyl-L-methionine + 4 H(+) = [[Fe-S] cluster scaffold protein] + N(6)-[(R)-dihydrolipoyl]-L-lysyl-[protein] + 4 Fe(3+) + 2 hydrogen sulfide + 2 5'-deoxyadenosine + 2 L-methionine + 2 reduced [2Fe-2S]-[ferredoxin]. The protein operates within protein modification; protein lipoylation via endogenous pathway; protein N(6)-(lipoyl)lysine from octanoyl-[acyl-carrier-protein]: step 2/2. Catalyzes the radical-mediated insertion of two sulfur atoms into the C-6 and C-8 positions of the octanoyl moiety bound to the lipoyl domains of lipoate-dependent enzymes, thereby converting the octanoylated domains into lipoylated derivatives. The polypeptide is Lipoyl synthase (Bartonella bacilliformis (strain ATCC 35685 / KC583 / Herrer 020/F12,63)).